Here is a 503-residue protein sequence, read N- to C-terminus: Methylthioalkylmalate synthase 3, chloroplastic (503 aa).

Residues 1–51 constitute a chloroplast transit peptide; the sequence is MASLLLTSSSMITTSCRSMVLRSGLPIGSSFPSLRLTRPYDKATLFVSCCS. Positions 85-359 constitute a Pyruvate carboxyltransferase domain; it reads VRVLDTTLRD…YTKIDSRQIM (275 aa).

Belongs to the alpha-IPM synthase/homocitrate synthase family. It depends on Mn(2+) as a cofactor. Highly expressed in roots, leaves, and siliques. Lower amounts in stems and flowers.

It is found in the plastid. Its subcellular location is the chloroplast. The catalysed reaction is an omega-(methylsulfanyl)-2-oxoalkanoate + acetyl-CoA + H2O = a 2-(omega-methylsulfanyl)alkylmalate + CoA + H(+). With respect to regulation, not activated by ATP. Its function is as follows. Determines the side chain length of aliphatic glucosinolate structures. Accepts all the omega-methylthio-2-oxoalkanoic acids needed to form the known C3 to C8 glucosinolates. Also able to convert pyruvate to citramalate, 2-oxoisovalerate to isopropylmalate, 4-methyl-2-oxopentanoate and 5-methyl-2-oxohexanoate for Leu-derived glucosinolates, 3-methyl-2-oxopentanoate for Ile-derived glucosinolates and phenylpyruvate to phenylethylglucosinolate. This is Methylthioalkylmalate synthase 3, chloroplastic (MAM3) from Arabidopsis thaliana (Mouse-ear cress).